A 384-amino-acid polypeptide reads, in one-letter code: Polyketide synthase BAS (384 aa).

The Nucleophile and monoketide coumarate intermediate role is filled by cysteine 157. Residue cysteine 157 is modified to S-(4-hydroxycinnamyl)cysteine.

It belongs to the thiolase-like superfamily. Chalcone/stilbene synthases family. Homodimer.

The catalysed reaction is 4-coumaroyl-CoA + malonyl-CoA + H2O + H(+) = 4-hydroxybenzalacetone + 2 CO2 + 2 CoA. It functions in the pathway secondary metabolite biosynthesis; flavonoid biosynthesis. In terms of biological role, polyketide synthase producing 4-hydroxybenzalacetone. Can use p-coumaryl-CoA as substrate but does not accept hexanoyl-CoA, isobutyryl-CoA, isovaleryl-CoA, and acetyl-CoA as a substrates. Catalyzes the initial key reaction step in the biosynthesis of phenylbutanoids. The chain is Polyketide synthase BAS (BAS) from Rheum palmatum (Chinese rhubarb).